The chain runs to 195 residues: MRVAEVVRNTSETQIRVKIDLDGTGRQKLATGVPFLDHMLDQIARHGLVDLDIEAHGDTHIDDHHTVEDVGITLGQAVAKAVGDKKGIRRYGHSYVPLDEALSRVVIDFSGRPGLEFHVPFTRARIGTFDVDLSIEFFRGFVNHAGVTLHIDNLRGVNAHHQLETVFKAFGRALRMAVELDERAAGQIPSTKGSL.

This sequence belongs to the imidazoleglycerol-phosphate dehydratase family.

It localises to the cytoplasm. It catalyses the reaction D-erythro-1-(imidazol-4-yl)glycerol 3-phosphate = 3-(imidazol-4-yl)-2-oxopropyl phosphate + H2O. It participates in amino-acid biosynthesis; L-histidine biosynthesis; L-histidine from 5-phospho-alpha-D-ribose 1-diphosphate: step 6/9. This is Imidazoleglycerol-phosphate dehydratase from Burkholderia thailandensis (strain ATCC 700388 / DSM 13276 / CCUG 48851 / CIP 106301 / E264).